Here is a 403-residue protein sequence, read N- to C-terminus: Probable N-acetyltransferase HLS1 (403 aa).

The 176-residue stretch at 2 to 177 (TVVREYDPTR…VNPVYAHRVN (176 aa)) folds into the N-acetyltransferase domain.

It belongs to the acetyltransferase family.

Its function is as follows. Ethylene-responsive N-acetyltransferase required for differential cell elongation in the hypocotyl. Regulates apical hook formation of dark-grown seedlings. May control differential cell growth by regulating auxin activity. May be involved in negative feedback regulation of auxin homeostasis through the control of GH3-like genes. Modulates de novo shoot organogenesis. This Arabidopsis thaliana (Mouse-ear cress) protein is Probable N-acetyltransferase HLS1 (HLS1).